Reading from the N-terminus, the 447-residue chain is Nuclear envelope integral membrane protein 2 (447 aa).

An N-terminal signal peptide occupies residues 1 to 28 (MGPRRLPWARPGPALGLLLLALAGAVPA). Helical transmembrane passes span 144-164 (EMLD…FHFA), 173-193 (FFYL…VLLA), 202-222 (STFW…IYCF), 235-255 (IYVL…CYQH), and 275-295 (AFVF…IIAV). The segment at 410-438 (TRTESEQDETTSYIHEGDDENEDEIHEPI) is disordered.

It belongs to the NEMP family.

The protein localises to the nucleus inner membrane. This is Nuclear envelope integral membrane protein 2 (NEMP2) from Gallus gallus (Chicken).